A 332-amino-acid polypeptide reads, in one-letter code: Fructose-1,6-bisphosphatase class 1 (332 aa).

Mg(2+) is bound by residues E89, D110, L112, and D113. Substrate is bound by residues 113–116, N206, Y239, 257–259, and K269; these read DGSS and YLY. E275 provides a ligand contact to Mg(2+).

This sequence belongs to the FBPase class 1 family. Homotetramer. It depends on Mg(2+) as a cofactor.

Its subcellular location is the cytoplasm. It catalyses the reaction beta-D-fructose 1,6-bisphosphate + H2O = beta-D-fructose 6-phosphate + phosphate. The protein operates within carbohydrate biosynthesis; gluconeogenesis. This Escherichia coli O157:H7 protein is Fructose-1,6-bisphosphatase class 1.